The following is a 201-amino-acid chain: Large ribosomal subunit protein bL25 (201 aa).

The protein belongs to the bacterial ribosomal protein bL25 family. CTC subfamily. Part of the 50S ribosomal subunit; part of the 5S rRNA/L5/L18/L25 subcomplex. Contacts the 5S rRNA. Binds to the 5S rRNA independently of L5 and L18.

In terms of biological role, this is one of the proteins that binds to the 5S RNA in the ribosome where it forms part of the central protuberance. In Burkholderia vietnamiensis (strain G4 / LMG 22486) (Burkholderia cepacia (strain R1808)), this protein is Large ribosomal subunit protein bL25.